A 486-amino-acid chain; its full sequence is Keratin-3, type I cytoskeletal 51 kDa (486 aa).

Residues 1–125 (MSNYSIKQSA…AGGMDIFSTN (125 aa)) are head. The interval 126–161 (EKQTMQNLNDRLASYLDKVHALETANTELERKIKEW) is coil 1A. The IF rod domain occupies 126-442 (EKQTMQNLND…RLLDGDLSKP (317 aa)). A linker 1 region spans residues 162-184 (YEKQRPGSSSGDGAKDYSKYYTM). The coil 1B stretch occupies residues 185 to 276 (INDLKNQIIA…KNHEDELKGM (92 aa)). Positions 277–299 (QVTQVGQVNVEMNAAPSSDLTKI) are linker 12. The segment at 300–438 (LNDMRSQYED…ETYRRLLDGD (139 aa)) is coil 2. The disordered stretch occupies residues 435–466 (LDGDLSKPKSGGGTSTNTGSTSSKGSTRTVKR). Residues 439–486 (LSKPKSGGGTSTNTGSTSSKGSTRTVKRREIIEEVVDGKVVSTKVVDM) form a tail region. The span at 449-461 (STNTGSTSSKGST) shows a compositional bias: low complexity.

The protein belongs to the intermediate filament family. As to quaternary structure, heterotetramer of two type I and two type II keratins.

This Xenopus laevis (African clawed frog) protein is Keratin-3, type I cytoskeletal 51 kDa.